A 413-amino-acid polypeptide reads, in one-letter code: Zinc finger protein 821 (413 aa).

The interval 26–83 is disordered; that stretch reads RQAMMKTDFPGDLGSQRQAIQQLRDQDSSSSDSEGDEEETTQDEVSSHTSEEDGGVVK. The segment covering 58 to 67 has biased composition (acidic residues); that stretch reads SEGDEEETTQ. 2 consecutive C2H2-type zinc fingers follow at residues 117–141 and 151–173; these read QLCQCPLCQLDCGSREQLIAHVYQH and YMCPVCGRALSSPGSLGRHLLIH. The stretch at 260 to 367 forms a coiled coil; that stretch reads ALRRQNEPLE…EKMDMMLRAQ (108 aa). The disordered stretch occupies residues 279–320; sequence RTAKKSRRDNETPEEREVRRMRDREAKRLQRMQETDEQRARR.

This sequence belongs to the krueppel C2H2-type zinc-finger protein family.

The protein localises to the nucleus. In terms of biological role, may be involved in transcriptional regulation. The protein is Zinc finger protein 821 (Znf821) of Mus musculus (Mouse).